The following is a 145-amino-acid chain: Probable low molecular weight protein-tyrosine-phosphatase EpsP (145 aa).

Residue C9 is the Nucleophile of the active site. Residue R15 is part of the active site. The active-site Proton donor is D114.

The protein belongs to the low molecular weight phosphotyrosine protein phosphatase family.

It catalyses the reaction O-phospho-L-tyrosyl-[protein] + H2O = L-tyrosyl-[protein] + phosphate. Its pathway is glycan metabolism; exopolysaccharide biosynthesis. May be involved in assembly or function of the EPS I polymerization/export complex and/or the EpsB ATPase. Alternatively it may function in the removal of the terminal phosphate from C55-isoprenyl pyrophosphate in order to recycle the C55-isoprenyl phosphate lipid carrier used in the synthesis of polysaccharide repeat units. The protein is Probable low molecular weight protein-tyrosine-phosphatase EpsP (epsP) of Ralstonia nicotianae (strain ATCC BAA-1114 / GMI1000) (Ralstonia solanacearum).